A 388-amino-acid chain; its full sequence is AT-rich binding protein (388 aa).

The C2H2-type 1 zinc finger occupies 29-52 (IVCHTCQEELQTQDQFWKHIQDEH). Composition is skewed to low complexity over residues 138-165 (QQHQ…LQQQ) and 249-265 (VSVS…STTP). 2 disordered regions span residues 138–168 (QQHQ…QRDV) and 240–265 (PPPP…STTP). C2H2-type zinc fingers lie at residues 321 to 345 (YVCD…RVVH) and 351 to 374 (FNCE…KKKH).

It is found in the nucleus. May be a transcription factor for genes having (A+T) stretches in their promoter and/or enhancer regions. Binds to AT rich DNA. This chain is AT-rich binding protein, found in Drosophila melanogaster (Fruit fly).